Reading from the N-terminus, the 482-residue chain is tRNA sulfurtransferase (482 aa).

Residues 61–165 (LVIRDALTRI…DDRLLLIKGR (105 aa)) enclose the THUMP domain. ATP-binding positions include 183-184 (LI), Lys-265, Gly-287, and Gln-296. The cysteines at positions 344 and 456 are disulfide-linked. The Rhodanese domain occupies 404–482 (FGPNDVILDI…GFANVKVYRP (79 aa)). Cys-456 functions as the Cysteine persulfide intermediate in the catalytic mechanism.

This sequence belongs to the ThiI family.

The protein localises to the cytoplasm. It catalyses the reaction [ThiI sulfur-carrier protein]-S-sulfanyl-L-cysteine + a uridine in tRNA + 2 reduced [2Fe-2S]-[ferredoxin] + ATP + H(+) = [ThiI sulfur-carrier protein]-L-cysteine + a 4-thiouridine in tRNA + 2 oxidized [2Fe-2S]-[ferredoxin] + AMP + diphosphate. The enzyme catalyses [ThiS sulfur-carrier protein]-C-terminal Gly-Gly-AMP + S-sulfanyl-L-cysteinyl-[cysteine desulfurase] + AH2 = [ThiS sulfur-carrier protein]-C-terminal-Gly-aminoethanethioate + L-cysteinyl-[cysteine desulfurase] + A + AMP + 2 H(+). It functions in the pathway cofactor biosynthesis; thiamine diphosphate biosynthesis. Functionally, catalyzes the ATP-dependent transfer of a sulfur to tRNA to produce 4-thiouridine in position 8 of tRNAs, which functions as a near-UV photosensor. Also catalyzes the transfer of sulfur to the sulfur carrier protein ThiS, forming ThiS-thiocarboxylate. This is a step in the synthesis of thiazole, in the thiamine biosynthesis pathway. The sulfur is donated as persulfide by IscS. The polypeptide is tRNA sulfurtransferase (Salmonella typhimurium (strain LT2 / SGSC1412 / ATCC 700720)).